A 146-amino-acid polypeptide reads, in one-letter code: Acidic phospholipase A2 S5-32M (146 aa).

A signal peptide spans 1–19 (MYPAHLLVLLAVCVSLLGA). Positions 20–27 (ASIPPQPL) are excised as a propeptide. Cystine bridges form between C38/C98, C54/C145, C56/C72, C71/C126, C78/C119, C87/C112, and C105/C117. 3 residues coordinate Ca(2+): Y55, G57, and G59. H75 is a catalytic residue. Ca(2+) is bound at residue D76. The active site involves D120.

The protein belongs to the phospholipase A2 family. Group I subfamily. D49 sub-subfamily. Ca(2+) is required as a cofactor. Expressed by the venom gland.

Its subcellular location is the secreted. It carries out the reaction a 1,2-diacyl-sn-glycero-3-phosphocholine + H2O = a 1-acyl-sn-glycero-3-phosphocholine + a fatty acid + H(+). Functionally, snake venom phospholipase A2 (PLA2) that inhibits collagen-induced platelet aggregation. PLA2 catalyzes the calcium-dependent hydrolysis of the 2-acyl groups in 3-sn-phosphoglycerides. This chain is Acidic phospholipase A2 S5-32M, found in Austrelaps superbus (Lowland copperhead snake).